The chain runs to 747 residues: Ferric reduction oxidase 7, chloroplastic (747 aa).

The segment at 1-23 (MDDHETPLLSKDLSSSSSSSSSS) is disordered. The N-terminal 28 residues, 1–28 (MDDHETPLLSKDLSSSSSSSSSSSSVVV), are a transit peptide targeting the chloroplast. A compositionally biased stretch (low complexity) spans 14–23 (SSSSSSSSSS). Helical transmembrane passes span 37-56 (VVMSVIFVTWVVFLMMYPGS), 81-99 (FLIFSGPILVIAILASLYL), 132-155 (FGVVSAAEFLGIMVFSVFFLWAIY), 222-245 (YHVWLGHITMTFFSLHGLCYVVGW), 297-321 (THQLYIVFVVFLALHVGDYLFSIVA), and 344-364 (VISAKSLPCGTLELVLSKPPN). The 122-residue stretch at 187-308 (FGMIGLLCMV…QLYIVFVVFL (122 aa)) folds into the Ferric oxidoreductase domain. The heme site is built by His-223, His-237, His-298, and His-311. Residues 337-454 (QSRRTVDVIS…EGPYGHESPY (118 aa)) enclose the FAD-binding FR-type domain. 386–389 (HPFS) is a binding site for FAD. 446-449 (GPYG) serves as a coordination point for NAD(+). The next 2 membrane-spanning stretches (helical) occupy residues 574 to 596 (NIWSGLYLIISTIGFIAMITLVD) and 612 to 634 (GLLFVVCMVASVLIFGGLVVVFW).

The protein belongs to the ferric reductase (FRE) family. FAD is required as a cofactor. As to expression, expressed in shoots, flowers and siliques. Detected in cotyledons, leaves and trichomes, but not in roots.

It is found in the plastid. The protein resides in the chloroplast membrane. The catalysed reaction is 2 a Fe(II)-siderophore + NAD(+) + H(+) = 2 a Fe(III)-siderophore + NADH. Functionally, ferric chelate reductase involved in iron mobilization from the cytosol into the chloroplast. May participate in the transport of electrons to a Fe(3+) ion via FAD and heme intermediates. Might be involved iron homeostasis in trichomes. The sequence is that of Ferric reduction oxidase 7, chloroplastic (FRO7) from Arabidopsis thaliana (Mouse-ear cress).